The primary structure comprises 204 residues: Guanylate kinase (204 aa).

The Guanylate kinase-like domain maps to 4-182; it reads GMLVVVSGPS…AVNDLEAVLT (179 aa). 11–18 lines the ATP pocket; it reads GPSGAGKG.

Belongs to the guanylate kinase family.

It is found in the cytoplasm. The enzyme catalyses GMP + ATP = GDP + ADP. In terms of biological role, essential for recycling GMP and indirectly, cGMP. The sequence is that of Guanylate kinase from Carboxydothermus hydrogenoformans (strain ATCC BAA-161 / DSM 6008 / Z-2901).